The sequence spans 1379 residues: DNA-directed RNA polymerase subunit beta (1379 aa).

The protein belongs to the RNA polymerase beta chain family. In terms of assembly, in plastids the minimal PEP RNA polymerase catalytic core is composed of four subunits: alpha, beta, beta', and beta''. When a (nuclear-encoded) sigma factor is associated with the core the holoenzyme is formed, which can initiate transcription.

The protein localises to the plastid. Its subcellular location is the chloroplast. It carries out the reaction RNA(n) + a ribonucleoside 5'-triphosphate = RNA(n+1) + diphosphate. Its function is as follows. DNA-dependent RNA polymerase catalyzes the transcription of DNA into RNA using the four ribonucleoside triphosphates as substrates. This Trieres chinensis (Marine centric diatom) protein is DNA-directed RNA polymerase subunit beta.